A 449-amino-acid chain; its full sequence is G-protein coupled receptor 61 (449 aa).

Positions 1–14 (MESSPIPQSSGNSS) are enriched in low complexity. Residues 1-29 (MESSPIPQSSGNSSTLGRALQTPGPSTAS) are disordered. Topologically, residues 1–44 (MESSPIPQSSGNSSTLGRALQTPGPSTASGVPELGLRDVASESV) are extracellular. Asn-12 carries N-linked (GlcNAc...) asparagine glycosylation. Residues 45–67 (ALFFMLLLDLTAVAGNAAVMAVI) traverse the membrane as a helical segment. Over 68–75 (AKTPALRK) the chain is Cytoplasmic. A helical membrane pass occupies residues 76-98 (FVFVFHLCLVDLLAALTLMPLAM). Over 99-112 (LSSSALFDHALFGE) the chain is Extracellular. A helical transmembrane segment spans residues 113–135 (VACRLYLFLSVCFVSLAILSVSA). Residues 136–155 (INVERYYYVVHPMRYEVRMT) lie on the Cytoplasmic side of the membrane. The helical transmembrane segment at 156–178 (LGLVASVLVGVWVKALAMASVPV) threads the bilayer. Over 179 to 206 (LGRVYWEEGAPSVNPGCSLQWSHSAYCQ) the chain is Extracellular. Residues 207-229 (LFVVVFAVLYFLLPLILIFVVYC) form a helical membrane-spanning segment. Residues 230–287 (SMFRVARVAAMQHGPLPTWMETPRQRSESLSSRSTMVTSSGAHQTTPHRTFGGGKAAV) lie on the Cytoplasmic side of the membrane. A helical transmembrane segment spans residues 288–310 (VLLAVGGQFLLCWLPYFSFHLYV). The Extracellular segment spans residues 311-324 (ALSAQPISAGQVEN). A helical membrane pass occupies residues 325-344 (VVTWIGYFCFTSNPFFYGCL). Residues 345 to 449 (NRQIRGELSK…RPAPSPRLES (105 aa)) lie on the Cytoplasmic side of the membrane.

It belongs to the G-protein coupled receptor 1 family. As to quaternary structure, forms heterodimer with MTNR1B. Interacts with ARRB1 and ARRB2 in a spontaneous and agonist-independent manner; leading to the internalization of GPR61 in the endosomal compartment. As to expression, predominantly expressed in the brain and testes, with relatively lower expression observed in the eye, adrenal gland and pituitary gland.

It localises to the cell membrane. Its subcellular location is the endosome membrane. Functionally, orphan G-protein coupled receptor. Constitutively activates the G(s)-alpha/cAMP signaling pathway. Shows a reciprocal regulatory interaction with the melatonin receptor MTNR1B most likely through receptor heteromerization. May be involved in the regulation of food intake and body weight. This is G-protein coupled receptor 61 (Gpr61) from Mus musculus (Mouse).